The sequence spans 867 residues: Retinoblastoma-related protein 1 (867 aa).

A domain A region spans residues 275-476; that stretch reads TPVTSAMTTA…EKGSSLYNSL (202 aa). The pocket; binds RPD3I and RBAP1 stretch occupies residues 275-722; it reads TPVTSAMTTA…NEVFVPAAKP (448 aa). Residues 477–594 are spacer; that stretch reads IVARPSVASE…PVGGNEKCAD (118 aa). Residues 512–563 are disordered; that stretch reads EGLPATPSKKRAAGPDDNADPRSPKRSCNESRNTVVERNLQTPPPKQSHMVS. Residues 530 to 540 show a composition bias toward basic and acidic residues; that stretch reads ADPRSPKRSCN. Polar residues predominate over residues 541–552; that stretch reads ESRNTVVERNLQ. The interval 595-722 is domain B; the sequence is VTIHIFFSKI…NEVFVPAAKP (128 aa). 2 disordered regions span residues 734–762 and 843–867; these read PEDKKNASGQIPGSPKPSPFPNLPDMSPK and QINGGSTSDPAAAFSPLSKKRETDT.

Belongs to the retinoblastoma protein (RB) family. As to quaternary structure, interacts with RPD3I, RBAP1, the Arabidopsis cyclin CYCD3-1, the mastrevirus replication-associated protein A (RepA) and the begomovirus replication-associated protein (Rep). In terms of tissue distribution, ubiquitous.

It localises to the nucleus. Functionally, regulator of biological processes that recruits a histone deacetylase to control gene transcription. May play a role in the entry into mitosis, negatively regulating the cell proliferation. Formation of stable complexes with geminiviridae replication-associated proteins may create a cellular environment which favors viral DNA replication. This Zea mays (Maize) protein is Retinoblastoma-related protein 1 (RBR1).